A 157-amino-acid chain; its full sequence is Serine-protein kinase RsbW (157 aa).

The protein belongs to the anti-sigma-factor family.

The enzyme catalyses L-seryl-[protein] + ATP = O-phospho-L-seryl-[protein] + ADP + H(+). The catalysed reaction is L-threonyl-[protein] + ATP = O-phospho-L-threonyl-[protein] + ADP + H(+). Functionally, negative regulator of sigma-B activity. Phosphorylates and inactivates its specific antagonist protein, RsbV. Upon phosphorylation of RsbV, RsbW is released and binds to sigma-B, thereby blocking its ability to form an RNA polymerase holoenzyme (E-sigma-B). The sequence is that of Serine-protein kinase RsbW from Listeria innocua serovar 6a (strain ATCC BAA-680 / CLIP 11262).